Reading from the N-terminus, the 283-residue chain is Urease accessory protein UreD 2 (283 aa).

Residues 1-11 show a composition bias toward basic and acidic residues; it reads MGRRAPDRLDR. The disordered stretch occupies residues 1–30; it reads MGRRAPDRLDRGVTTTSPRTQAPPQAGRGV. Polar residues predominate over residues 13 to 23; the sequence is VTTTSPRTQAP.

The protein belongs to the UreD family. UreD, UreF and UreG form a complex that acts as a GTP-hydrolysis-dependent molecular chaperone, activating the urease apoprotein by helping to assemble the nickel containing metallocenter of UreC. The UreE protein probably delivers the nickel.

Its subcellular location is the cytoplasm. In terms of biological role, required for maturation of urease via the functional incorporation of the urease nickel metallocenter. The sequence is that of Urease accessory protein UreD 2 from Saccharopolyspora erythraea (strain ATCC 11635 / DSM 40517 / JCM 4748 / NBRC 13426 / NCIMB 8594 / NRRL 2338).